The chain runs to 794 residues: Potassium transporter 2 (794 aa).

The Cytoplasmic portion of the chain corresponds to 1 to 21 (MDLNLGKCCGSRSSKKESWRS). The chain crosses the membrane as a helical span at residues 22–42 (VLLLAYQSLGVVYGDLSISPL). Residues 43–64 (YVFKSTFAEDIQHSETNEEIYG) are Extracellular-facing. A helical transmembrane segment spans residues 65 to 85 (VMSFVFWTLTLVPLLKYVFIV). At 86–153 (LRADDNGEGG…EKHKWLHTAL (68 aa)) the chain is on the cytoplasmic side. Residues 154–174 (LLLVLLGTCMVIGDGLLTPAI) traverse the membrane as a helical segment. Residues 175–193 (SVFSAVSGLELNMSKEHHQ) are Extracellular-facing. A helical transmembrane segment spans residues 194–214 (YAVIPITCFILVCLFSLQHFG). Residues 215–217 (THR) lie on the Cytoplasmic side of the membrane. The helical transmembrane segment at 218–238 (VGFVFAPIVLTWLLCISGIGL) threads the bilayer. Over 239–265 (YNIIQWNPHIYKALSPTYMFMFLRKTR) the chain is Extracellular. Residues 266–286 (VSGWMSLGGILLCITGAEAMF) form a helical membrane-spanning segment. The Cytoplasmic segment spans residues 287–294 (ADLGHFNY). The chain crosses the membrane as a helical span at residues 295-315 (AAIQIAFTFLVYPALILAYMG). The Extracellular segment spans residues 316–339 (QAAYLSRHHHSAHAIGFYVSVPKC). Residues 340-360 (LHWPVLAVAILASVVGSQAII) form a helical membrane-spanning segment. The Cytoplasmic portion of the chain corresponds to 361–391 (SGTFSIINQSQSLGCFPRVKVIHTSDKMHGQ). Residues 392–412 (IYIPEINWMLMILCIAVTIGF) traverse the membrane as a helical segment. The Extracellular portion of the chain corresponds to 413–417 (RDVKH). The next 2 membrane-spanning stretches (helical) occupy residues 418–438 (LGNASGLAVMAVMLVTTCLTS) and 439–459 (LVIVLCWHKPPILALAFLLFF). The Extracellular segment spans residues 460 to 476 (GSIELLYFSASLTKFRE). The helical transmembrane segment at 477-497 (GAWLPILLSLIFMIIMFVWHY) threads the bilayer. Over 498–794 (TTIKKYEFDL…LLEVGMVYVV (297 aa)) the chain is Cytoplasmic.

It belongs to the HAK/KUP transporter (TC 2.A.72.3) family. Slightly detected in roots, stems, leaves and flowers of mature plants and in potassium-starved plants.

It localises to the cell membrane. Low-affinity potassium transporter. Could mediate the potassium-dependent cell expansion in growing tissues. This chain is Potassium transporter 2 (POT2), found in Arabidopsis thaliana (Mouse-ear cress).